A 256-amino-acid polypeptide reads, in one-letter code: MVALRLIPCLDVARGRVVKGVNFVGLRDAGDPVELACRYSGAGADELVFLDIAASHEGRGTLIDMVHRTAESVTIPFTVGGGISTVEGITDLLRAGADKVSLNSSAVRRPELVREGAERFGCQCIVVAIDARRRDGDGWDVFVKGGRENTGLDAVDWARRVAELGAGEILLTSMDGDGTQAGYDLALTRAVADAVPVPVIASGGAGCIDHIAQALETGPDGGHASAALLASLLHDGVLTVEEIKQDLLARGLSIRP.

Residues D11 and D130 contribute to the active site.

Belongs to the HisA/HisF family. As to quaternary structure, heterodimer of HisH and HisF.

It is found in the cytoplasm. It carries out the reaction 5-[(5-phospho-1-deoxy-D-ribulos-1-ylimino)methylamino]-1-(5-phospho-beta-D-ribosyl)imidazole-4-carboxamide + L-glutamine = D-erythro-1-(imidazol-4-yl)glycerol 3-phosphate + 5-amino-1-(5-phospho-beta-D-ribosyl)imidazole-4-carboxamide + L-glutamate + H(+). It participates in amino-acid biosynthesis; L-histidine biosynthesis; L-histidine from 5-phospho-alpha-D-ribose 1-diphosphate: step 5/9. Functionally, IGPS catalyzes the conversion of PRFAR and glutamine to IGP, AICAR and glutamate. The HisF subunit catalyzes the cyclization activity that produces IGP and AICAR from PRFAR using the ammonia provided by the HisH subunit. In Parasynechococcus marenigrum (strain WH8102), this protein is Imidazole glycerol phosphate synthase subunit hisF1 (hisF1).